A 1136-amino-acid polypeptide reads, in one-letter code: Phytochrome (1136 aa).

The tract at residues 1-28 (MSTTRPRAATHSASSGSVSRSSKHSARV) is disordered. Residues 11–20 (HSASSGSVSR) are compositionally biased toward low complexity. One can recognise a GAF domain in the interval 231 to 414 (DIRLLCDTVV…VFGIQLNKEV (184 aa)). Residue C336 coordinates phytochromobilin. 2 consecutive PAS domains span residues 629–699 (VTNE…LQGE) and 762–833 (DYRA…TKLR). Residues 913–1132 (YIRQEIRNPL…IINVEFPLAQ (220 aa)) form the Histidine kinase domain.

Belongs to the phytochrome family. Homodimer. In terms of processing, contains one covalently linked phytochromobilin chromophore.

Its function is as follows. Regulatory photoreceptor which exists in two forms that are reversibly interconvertible by light: the Pr form that absorbs maximally in the red region of the spectrum and the Pfr form that absorbs maximally in the far-red region. Photoconversion of Pr to Pfr induces an array of morphogenic responses, whereas reconversion of Pfr to Pr cancels the induction of those responses. Pfr controls the expression of a number of nuclear genes including those encoding the small subunit of ribulose-bisphosphate carboxylase, chlorophyll A/B binding protein, protochlorophyllide reductase, rRNA, etc. It also controls the expression of its own gene(s) in a negative feedback fashion. The chain is Phytochrome from Picea abies (Norway spruce).